Here is a 309-residue protein sequence, read N- to C-terminus: Ribose-phosphate pyrophosphokinase (309 aa).

Residues 37-39 (DGE) and 96-97 (RQ) each bind ATP. Mg(2+) contacts are provided by His130 and Asp169. Residue Lys192 is part of the active site. D-ribose 5-phosphate-binding positions include Arg194, Asp218, and 222–226 (DTAGT).

It belongs to the ribose-phosphate pyrophosphokinase family. Class I subfamily. As to quaternary structure, homohexamer. Mg(2+) serves as cofactor.

The protein localises to the cytoplasm. The catalysed reaction is D-ribose 5-phosphate + ATP = 5-phospho-alpha-D-ribose 1-diphosphate + AMP + H(+). Its pathway is metabolic intermediate biosynthesis; 5-phospho-alpha-D-ribose 1-diphosphate biosynthesis; 5-phospho-alpha-D-ribose 1-diphosphate from D-ribose 5-phosphate (route I): step 1/1. Functionally, involved in the biosynthesis of the central metabolite phospho-alpha-D-ribosyl-1-pyrophosphate (PRPP) via the transfer of pyrophosphoryl group from ATP to 1-hydroxyl of ribose-5-phosphate (Rib-5-P). This chain is Ribose-phosphate pyrophosphokinase, found in Campylobacter jejuni subsp. jejuni serotype O:2 (strain ATCC 700819 / NCTC 11168).